We begin with the raw amino-acid sequence, 375 residues long: Succinyl-diaminopimelate desuccinylase (375 aa).

Residue His66 participates in Zn(2+) binding. Residue Asp68 is part of the active site. Asp99 contributes to the Zn(2+) binding site. Glu133 acts as the Proton acceptor in catalysis. Glu134, Glu162, and His348 together coordinate Zn(2+).

This sequence belongs to the peptidase M20A family. DapE subfamily. Homodimer. It depends on Zn(2+) as a cofactor. Requires Co(2+) as cofactor.

It catalyses the reaction N-succinyl-(2S,6S)-2,6-diaminopimelate + H2O = (2S,6S)-2,6-diaminopimelate + succinate. It functions in the pathway amino-acid biosynthesis; L-lysine biosynthesis via DAP pathway; LL-2,6-diaminopimelate from (S)-tetrahydrodipicolinate (succinylase route): step 3/3. In terms of biological role, catalyzes the hydrolysis of N-succinyl-L,L-diaminopimelic acid (SDAP), forming succinate and LL-2,6-diaminopimelate (DAP), an intermediate involved in the bacterial biosynthesis of lysine and meso-diaminopimelic acid, an essential component of bacterial cell walls. The sequence is that of Succinyl-diaminopimelate desuccinylase from Yersinia pseudotuberculosis serotype O:1b (strain IP 31758).